The sequence spans 141 residues: Zinc finger HIT domain-containing protein 3 (141 aa).

The segment at Leu1 to Cys28 adopts an HIT-type; degenerate zinc-finger fold. Cys8, Cys11, His24, and Cys28 together coordinate Zn(2+). Ser66 carries the post-translational modification Phosphoserine.

As to quaternary structure, thyroid receptor interacting proteins (TRIPs) specifically interact with the ligand binding domain of the thyroid receptor (TR). Requires the presence of thyroid hormone for its interaction. Interacts with NUFIP1. Interacts (via HIT-type zinc finger) with the RUVBL1/RUVBL2 complex in the presence of ADP.

It is found in the cytoplasm. The protein localises to the nucleus. In Pan troglodytes (Chimpanzee), this protein is Zinc finger HIT domain-containing protein 3 (ZNHIT3).